We begin with the raw amino-acid sequence, 87 residues long: Cell division topological specificity factor (87 aa).

It belongs to the MinE family.

In terms of biological role, prevents the cell division inhibition by proteins MinC and MinD at internal division sites while permitting inhibition at polar sites. This ensures cell division at the proper site by restricting the formation of a division septum at the midpoint of the long axis of the cell. The polypeptide is Cell division topological specificity factor (Vibrio vulnificus (strain CMCP6)).